The following is a 245-amino-acid chain: Carboxymethylenebutenolidase homolog (245 aa).

At alanine 2 the chain carries N-acetylalanine. Residues cysteine 132, aspartate 179, and histidine 212 contribute to the active site. Phosphoserine is present on serine 223.

Belongs to the dienelactone hydrolase family.

Its subcellular location is the cytoplasm. The protein resides in the cytosol. In terms of biological role, cysteine hydrolase. This is Carboxymethylenebutenolidase homolog (Cmbl) from Rattus norvegicus (Rat).